The sequence spans 159 residues: Ribosomal RNA large subunit methyltransferase H (159 aa).

S-adenosyl-L-methionine is bound by residues Leu-76, Gly-108, and 127 to 132; that span reads FSKMTF.

Belongs to the RNA methyltransferase RlmH family. In terms of assembly, homodimer.

The protein resides in the cytoplasm. It carries out the reaction pseudouridine(1915) in 23S rRNA + S-adenosyl-L-methionine = N(3)-methylpseudouridine(1915) in 23S rRNA + S-adenosyl-L-homocysteine + H(+). In terms of biological role, specifically methylates the pseudouridine at position 1915 (m3Psi1915) in 23S rRNA. In Staphylococcus carnosus (strain TM300), this protein is Ribosomal RNA large subunit methyltransferase H.